Reading from the N-terminus, the 210-residue chain is Large ribosomal subunit protein uL4 (210 aa).

The span at 41–51 shows a compositional bias: polar residues; that stretch reads ANARQGTQSTK. Disordered stretches follow at residues 41–60 and 67–98; these read ANARQGTQSTKTRGEVQGSS and KGTGNARMGTNRSPVRRHGGVAFGPRPRDFSK.

This sequence belongs to the universal ribosomal protein uL4 family. As to quaternary structure, part of the 50S ribosomal subunit.

In terms of biological role, one of the primary rRNA binding proteins, this protein initially binds near the 5'-end of the 23S rRNA. It is important during the early stages of 50S assembly. It makes multiple contacts with different domains of the 23S rRNA in the assembled 50S subunit and ribosome. Its function is as follows. Forms part of the polypeptide exit tunnel. The sequence is that of Large ribosomal subunit protein uL4 from Dehalococcoides mccartyi (strain ATCC BAA-2100 / JCM 16839 / KCTC 5957 / BAV1).